The sequence spans 259 residues: Imidazole glycerol phosphate synthase subunit HisF (259 aa).

Active-site residues include Asp11 and Asp130.

The protein belongs to the HisA/HisF family. Heterodimer of HisH and HisF.

The protein localises to the cytoplasm. It catalyses the reaction 5-[(5-phospho-1-deoxy-D-ribulos-1-ylimino)methylamino]-1-(5-phospho-beta-D-ribosyl)imidazole-4-carboxamide + L-glutamine = D-erythro-1-(imidazol-4-yl)glycerol 3-phosphate + 5-amino-1-(5-phospho-beta-D-ribosyl)imidazole-4-carboxamide + L-glutamate + H(+). It functions in the pathway amino-acid biosynthesis; L-histidine biosynthesis; L-histidine from 5-phospho-alpha-D-ribose 1-diphosphate: step 5/9. In terms of biological role, IGPS catalyzes the conversion of PRFAR and glutamine to IGP, AICAR and glutamate. The HisF subunit catalyzes the cyclization activity that produces IGP and AICAR from PRFAR using the ammonia provided by the HisH subunit. The polypeptide is Imidazole glycerol phosphate synthase subunit HisF (Solidesulfovibrio magneticus (strain ATCC 700980 / DSM 13731 / RS-1) (Desulfovibrio magneticus)).